Reading from the N-terminus, the 227-residue chain is Cytochrome c oxidase subunit 2 (227 aa).

Over 1-14 the chain is Mitochondrial intermembrane; that stretch reads MAHPVQLGFQDAAS. Residues 15 to 45 form a helical membrane-spanning segment; the sequence is PIMEELLYFHDHTLMIMFLISSLVLYIISLM. Topologically, residues 46–59 are mitochondrial matrix; the sequence is LTTKLTHTSTMDAQ. The helical transmembrane segment at 60-87 threads the bilayer; that stretch reads EVETVWTILPAAILILIALPSLRILYMM. The Mitochondrial intermembrane portion of the chain corresponds to 88–227; sequence DEITSPSLTL…HFEEWLLFTL (140 aa). The Cu cation site is built by histidine 161, cysteine 196, glutamate 198, cysteine 200, histidine 204, and methionine 207. Glutamate 198 contacts Mg(2+).

Belongs to the cytochrome c oxidase subunit 2 family. As to quaternary structure, component of the cytochrome c oxidase (complex IV, CIV), a multisubunit enzyme composed of 14 subunits. The complex is composed of a catalytic core of 3 subunits MT-CO1, MT-CO2 and MT-CO3, encoded in the mitochondrial DNA, and 11 supernumerary subunits COX4I, COX5A, COX5B, COX6A, COX6B, COX6C, COX7A, COX7B, COX7C, COX8 and NDUFA4, which are encoded in the nuclear genome. The complex exists as a monomer or a dimer and forms supercomplexes (SCs) in the inner mitochondrial membrane with NADH-ubiquinone oxidoreductase (complex I, CI) and ubiquinol-cytochrome c oxidoreductase (cytochrome b-c1 complex, complex III, CIII), resulting in different assemblies (supercomplex SCI(1)III(2)IV(1) and megacomplex MCI(2)III(2)IV(2)). Found in a complex with TMEM177, COA6, COX18, COX20, SCO1 and SCO2. Interacts with TMEM177 in a COX20-dependent manner. Interacts with COX20. Interacts with COX16. The cofactor is Cu cation.

It is found in the mitochondrion inner membrane. The enzyme catalyses 4 Fe(II)-[cytochrome c] + O2 + 8 H(+)(in) = 4 Fe(III)-[cytochrome c] + 2 H2O + 4 H(+)(out). Component of the cytochrome c oxidase, the last enzyme in the mitochondrial electron transport chain which drives oxidative phosphorylation. The respiratory chain contains 3 multisubunit complexes succinate dehydrogenase (complex II, CII), ubiquinol-cytochrome c oxidoreductase (cytochrome b-c1 complex, complex III, CIII) and cytochrome c oxidase (complex IV, CIV), that cooperate to transfer electrons derived from NADH and succinate to molecular oxygen, creating an electrochemical gradient over the inner membrane that drives transmembrane transport and the ATP synthase. Cytochrome c oxidase is the component of the respiratory chain that catalyzes the reduction of oxygen to water. Electrons originating from reduced cytochrome c in the intermembrane space (IMS) are transferred via the dinuclear copper A center (CU(A)) of subunit 2 and heme A of subunit 1 to the active site in subunit 1, a binuclear center (BNC) formed by heme A3 and copper B (CU(B)). The BNC reduces molecular oxygen to 2 water molecules using 4 electrons from cytochrome c in the IMS and 4 protons from the mitochondrial matrix. This is Cytochrome c oxidase subunit 2 (MT-CO2) from Varecia variegata (Black-and-white ruffed lemur).